A 525-amino-acid polypeptide reads, in one-letter code: GMP synthase [glutamine-hydrolyzing] (525 aa).

The region spanning 9-207 is the Glutamine amidotransferase type-1 domain; sequence RILILDFGSQ…VRDICQCEAL (199 aa). Cysteine 86 (nucleophile) is an active-site residue. Catalysis depends on residues histidine 181 and glutamate 183. The GMPS ATP-PPase domain maps to 208 to 400; sequence WTPAKIIDDA…LGLPYDMLYR (193 aa). 235–241 serves as a coordination point for ATP; that stretch reads SGGVDSS.

As to quaternary structure, homodimer.

The enzyme catalyses XMP + L-glutamine + ATP + H2O = GMP + L-glutamate + AMP + diphosphate + 2 H(+). It functions in the pathway purine metabolism; GMP biosynthesis; GMP from XMP (L-Gln route): step 1/1. In terms of biological role, catalyzes the synthesis of GMP from XMP. This Escherichia coli O127:H6 (strain E2348/69 / EPEC) protein is GMP synthase [glutamine-hydrolyzing].